A 137-amino-acid polypeptide reads, in one-letter code: Large ribosomal subunit protein uL16 (137 aa).

Belongs to the universal ribosomal protein uL16 family. Part of the 50S ribosomal subunit.

In terms of biological role, binds 23S rRNA and is also seen to make contacts with the A and possibly P site tRNAs. This chain is Large ribosomal subunit protein uL16, found in Lactococcus lactis subsp. lactis (strain IL1403) (Streptococcus lactis).